Consider the following 671-residue polypeptide: RNA polymerase sigma factor RpoD (671 aa).

2 disordered regions span residues 1–45 and 229–260; these read MKKK…SKIK and DDDE…VSEK. The span at 251–260 shows a compositional bias: basic and acidic residues; the sequence is EERKKVVSEK. The tract at residues 436–506 is sigma-70 factor domain-2; sequence MAKSNLRLVV…SRAIADQART (71 aa). The Interaction with polymerase core subunit RpoC signature appears at 460-463; the sequence is DLIQ. Residues 515-591 form a sigma-70 factor domain-3 region; it reads DTINRINKVM…DKNIVSSIDH (77 aa). The tract at residues 604 to 658 is sigma-70 factor domain-4; the sequence is VLDQLNEREKAVIRMRFGLLDDESDRTLEEIGKELNVTRERVRQIESSAIKKLRS. Positions 631-650 form a DNA-binding region, H-T-H motif; that stretch reads LEEIGKELNVTRERVRQIES.

This sequence belongs to the sigma-70 factor family. RpoD/SigA subfamily. Interacts transiently with the RNA polymerase catalytic core.

The protein resides in the cytoplasm. Its function is as follows. Sigma factors are initiation factors that promote the attachment of RNA polymerase to specific initiation sites and are then released. This sigma factor is the primary sigma factor during exponential growth. This is RNA polymerase sigma factor RpoD from Helicobacter pylori (strain ATCC 700392 / 26695) (Campylobacter pylori).